Here is a 276-residue protein sequence, read N- to C-terminus: NAD-capped RNA hydrolase NudC (276 aa).

Arginine 82 provides a ligand contact to substrate. Zn(2+)-binding residues include cysteine 112 and cysteine 115. Position 125 (glutamate 125) interacts with substrate. Zn(2+) is bound by residues cysteine 130 and cysteine 133. Residue tyrosine 138 coordinates substrate. Residues 139–262 (PRLSPSMIVL…SIARYLIELY (124 aa)) enclose the Nudix hydrolase domain. 3 residues coordinate a divalent metal cation: alanine 172, glutamate 188, and glutamate 192. The short motif at 173–194 (GYVEPGESVEQCVAREVREEVG) is the Nudix box element. 206-213 (QGWPFPHS) is a substrate binding site. Glutamate 233 contributes to the a divalent metal cation binding site. Alanine 255 is a binding site for substrate.

This sequence belongs to the Nudix hydrolase family. NudC subfamily. Homodimer. The cofactor is Mg(2+). Requires Mn(2+) as cofactor. Zn(2+) serves as cofactor.

It carries out the reaction a 5'-end NAD(+)-phospho-ribonucleoside in mRNA + H2O = a 5'-end phospho-adenosine-phospho-ribonucleoside in mRNA + beta-nicotinamide D-ribonucleotide + 2 H(+). The catalysed reaction is NAD(+) + H2O = beta-nicotinamide D-ribonucleotide + AMP + 2 H(+). The enzyme catalyses NADH + H2O = reduced beta-nicotinamide D-ribonucleotide + AMP + 2 H(+). Functionally, mRNA decapping enzyme that specifically removes the nicotinamide adenine dinucleotide (NAD) cap from a subset of mRNAs by hydrolyzing the diphosphate linkage to produce nicotinamide mononucleotide (NMN) and 5' monophosphate mRNA. The NAD-cap is present at the 5'-end of some mRNAs and stabilizes RNA against 5'-processing. Has preference for mRNAs with a 5'-end purine. Catalyzes the hydrolysis of a broad range of dinucleotide pyrophosphates. This Stutzerimonas stutzeri (strain A1501) (Pseudomonas stutzeri) protein is NAD-capped RNA hydrolase NudC.